Consider the following 286-residue polypeptide: MGKEVDVSTLEAGGARDYIDPPPAPLVDVDELGKWSLYRALIAEFVATLLFLYVTVATVIGYKHQTDAAVNGADAACGGVGVLGIAWAFGGMIFILVYCTAGVSGGHINPAVTLGLFLARKVSLVRALLYMAAQCLGAICGVALVKGFQSSLYDRYGGGANELAAGYSTGTGLAAEIIGTFVLVYTVFSATDPKRNARDSHVPVLAPLPIGFAVFMVHLATIPITGTGINPARSLGVAVVYNNNKAWSDQWIFWVGPFIGAAIAALYHQVILRASARGYGSFRSNA.

2 consecutive transmembrane segments (helical) span residues 40-60 (ALIAEFVATLLFLYVTVATVI) and 77-97 (CGGVGVLGIAWAFGGMIFILV). The short motif at 109-111 (NPA) is the NPA 1 element. Transmembrane regions (helical) follow at residues 128–148 (LLYMAAQCLGAICGVALVKGF), 170–190 (GTGLAAEIIGTFVLVYTVFSA), and 204–224 (VLAPLPIGFAVFMVHLATIPI). The NPA 2 signature appears at 230 to 232 (NPA). The helical transmembrane segment at 252–272 (IFWVGPFIGAAIAALYHQVIL) threads the bilayer.

The protein belongs to the MIP/aquaporin (TC 1.A.8) family. PIP (TC 1.A.8.11) subfamily. Expressed in roots.

It localises to the cell membrane. Its function is as follows. Water channel required to facilitate the transport of water across cell membrane. May play a role in root water uptake. The protein is Aquaporin PIP2-4 (PIP2-4) of Oryza sativa subsp. japonica (Rice).